A 376-amino-acid polypeptide reads, in one-letter code: Carbamoyl phosphate synthase small chain (376 aa).

Positions 1-187 (MKALLALEDG…KEDGSFLWKQ (187 aa)) are CPSase. The L-glutamine site is built by Ser45, Gly239, and Gly241. Residues 189-376 (KIPLIVYDYG…KEVVLLKLGC (188 aa)) form the Glutamine amidotransferase type-1 domain. Cys266 serves as the catalytic Nucleophile. L-glutamine contacts are provided by Leu267, Gln270, Asn308, Gly310, and Phe311. Residues His349 and Glu351 contribute to the active site.

It belongs to the CarA family. Composed of two chains; the small (or glutamine) chain promotes the hydrolysis of glutamine to ammonia, which is used by the large (or ammonia) chain to synthesize carbamoyl phosphate. Tetramer of heterodimers (alpha,beta)4.

The enzyme catalyses hydrogencarbonate + L-glutamine + 2 ATP + H2O = carbamoyl phosphate + L-glutamate + 2 ADP + phosphate + 2 H(+). It catalyses the reaction L-glutamine + H2O = L-glutamate + NH4(+). It functions in the pathway amino-acid biosynthesis; L-arginine biosynthesis; carbamoyl phosphate from bicarbonate: step 1/1. It participates in pyrimidine metabolism; UMP biosynthesis via de novo pathway; (S)-dihydroorotate from bicarbonate: step 1/3. In terms of biological role, small subunit of the glutamine-dependent carbamoyl phosphate synthetase (CPSase). CPSase catalyzes the formation of carbamoyl phosphate from the ammonia moiety of glutamine, carbonate, and phosphate donated by ATP, constituting the first step of 2 biosynthetic pathways, one leading to arginine and/or urea and the other to pyrimidine nucleotides. The small subunit (glutamine amidotransferase) binds and cleaves glutamine to supply the large subunit with the substrate ammonia. In Lawsonia intracellularis (strain PHE/MN1-00), this protein is Carbamoyl phosphate synthase small chain.